A 106-amino-acid chain; its full sequence is Large ribosomal subunit protein uL24 (106 aa).

Belongs to the universal ribosomal protein uL24 family. Part of the 50S ribosomal subunit.

One of two assembly initiator proteins, it binds directly to the 5'-end of the 23S rRNA, where it nucleates assembly of the 50S subunit. Functionally, one of the proteins that surrounds the polypeptide exit tunnel on the outside of the subunit. This is Large ribosomal subunit protein uL24 from Verminephrobacter eiseniae (strain EF01-2).